Here is a 190-residue protein sequence, read N- to C-terminus: Venom nerve growth factor (190 aa).

The first 7 residues, 1–7 (FLIGIWA), serve as a signal peptide directing secretion. The propeptide occupies 8–111 (APKSEDNVPL…SLNRNIRAKR (104 aa)). Cysteines 125 and 190 form a disulfide. N134 carries an N-linked (GlcNAc...) asparagine glycan.

Belongs to the NGF-beta family. Homodimer; non-covalently linked. In terms of processing, glycosylated. Expressed by the venom gland.

The protein localises to the secreted. In terms of biological role, nerve growth factor is important for the development and maintenance of the sympathetic and sensory nervous systems. It stimulates division and differentiation of sympathetic and embryonic sensory neurons as well as basal forebrain cholinergic neurons in the brain. Its relevance in the snake venom is not clear. However, it has been shown to inhibit metalloproteinase-dependent proteolysis of platelet glycoprotein Ib alpha, suggesting a metalloproteinase inhibition to prevent metalloprotease autodigestion and/or protection against prey proteases. Binds a lipid between the two protein chains in the homodimer. The lipid-bound form promotes histamine relase from mouse mast cells, contrary to the lipid-free form. This Agkistrodon contortrix contortrix (Southern copperhead) protein is Venom nerve growth factor.